The sequence spans 804 residues: Phenylalanine--tRNA ligase beta subunit (804 aa).

The tRNA-binding domain occupies Arg38–Ala148. Residues Pro401–Pro476 enclose the B5 domain. Asp454, Asp460, Glu463, and Glu464 together coordinate Mg(2+). One can recognise an FDX-ACB domain in the interval Ser710–Arg803.

This sequence belongs to the phenylalanyl-tRNA synthetase beta subunit family. Type 1 subfamily. As to quaternary structure, tetramer of two alpha and two beta subunits. Mg(2+) is required as a cofactor.

It is found in the cytoplasm. It carries out the reaction tRNA(Phe) + L-phenylalanine + ATP = L-phenylalanyl-tRNA(Phe) + AMP + diphosphate + H(+). This Bartonella quintana (strain Toulouse) (Rochalimaea quintana) protein is Phenylalanine--tRNA ligase beta subunit.